The chain runs to 345 residues: Holliday junction branch migration complex subunit RuvB (345 aa).

Residues 1–22 (MIETDALSGGTPRRLVTQQPLS) form a disordered region. The interval 4–193 (TDALSGGTPR…FGIVARLEFY (190 aa)) is large ATPase domain (RuvB-L). ATP contacts are provided by residues leucine 32, arginine 33, glycine 74, lysine 77, threonine 78, threonine 79, 140–142 (EDY), arginine 183, tyrosine 193, and arginine 230. Threonine 78 contacts Mg(2+). A small ATPAse domain (RuvB-S) region spans residues 194-264 (TPEELTRIVR…VADAALSMLD (71 aa)). The interval 267–345 (PAGLDVMDRK…HFGFVPPERV (79 aa)) is head domain (RuvB-H). DNA is bound by residues arginine 322 and arginine 327.

Belongs to the RuvB family. Homohexamer. Forms an RuvA(8)-RuvB(12)-Holliday junction (HJ) complex. HJ DNA is sandwiched between 2 RuvA tetramers; dsDNA enters through RuvA and exits via RuvB. An RuvB hexamer assembles on each DNA strand where it exits the tetramer. Each RuvB hexamer is contacted by two RuvA subunits (via domain III) on 2 adjacent RuvB subunits; this complex drives branch migration. In the full resolvosome a probable DNA-RuvA(4)-RuvB(12)-RuvC(2) complex forms which resolves the HJ.

It is found in the cytoplasm. The catalysed reaction is ATP + H2O = ADP + phosphate + H(+). In terms of biological role, the RuvA-RuvB-RuvC complex processes Holliday junction (HJ) DNA during genetic recombination and DNA repair, while the RuvA-RuvB complex plays an important role in the rescue of blocked DNA replication forks via replication fork reversal (RFR). RuvA specifically binds to HJ cruciform DNA, conferring on it an open structure. The RuvB hexamer acts as an ATP-dependent pump, pulling dsDNA into and through the RuvAB complex. RuvB forms 2 homohexamers on either side of HJ DNA bound by 1 or 2 RuvA tetramers; 4 subunits per hexamer contact DNA at a time. Coordinated motions by a converter formed by DNA-disengaged RuvB subunits stimulates ATP hydrolysis and nucleotide exchange. Immobilization of the converter enables RuvB to convert the ATP-contained energy into a lever motion, pulling 2 nucleotides of DNA out of the RuvA tetramer per ATP hydrolyzed, thus driving DNA branch migration. The RuvB motors rotate together with the DNA substrate, which together with the progressing nucleotide cycle form the mechanistic basis for DNA recombination by continuous HJ branch migration. Branch migration allows RuvC to scan DNA until it finds its consensus sequence, where it cleaves and resolves cruciform DNA. The polypeptide is Holliday junction branch migration complex subunit RuvB (Laribacter hongkongensis (strain HLHK9)).